A 171-amino-acid chain; its full sequence is Endoribonuclease YbeY (171 aa).

H130, H134, and H140 together coordinate Zn(2+).

Belongs to the endoribonuclease YbeY family. The cofactor is Zn(2+).

It is found in the cytoplasm. Functionally, single strand-specific metallo-endoribonuclease involved in late-stage 70S ribosome quality control and in maturation of the 3' terminus of the 16S rRNA. This is Endoribonuclease YbeY from Neisseria meningitidis serogroup C / serotype 2a (strain ATCC 700532 / DSM 15464 / FAM18).